Consider the following 424-residue polypeptide: Serine--tRNA ligase (424 aa).

Residues 1–15 (MIDPKLLRTDPDAVR) are compositionally biased toward basic and acidic residues. The segment at 1–27 (MIDPKLLRTDPDAVRRSQAARGEDSSV) is disordered. 230–232 (TSE) is an L-serine binding site. Residues 261–263 (RRE) and Val-277 each bind ATP. Glu-284 lines the L-serine pocket. Residue 348-351 (EITS) coordinates ATP. Thr-382 provides a ligand contact to L-serine.

The protein belongs to the class-II aminoacyl-tRNA synthetase family. Type-1 seryl-tRNA synthetase subfamily. Homodimer. The tRNA molecule binds across the dimer.

The protein localises to the cytoplasm. The enzyme catalyses tRNA(Ser) + L-serine + ATP = L-seryl-tRNA(Ser) + AMP + diphosphate + H(+). It carries out the reaction tRNA(Sec) + L-serine + ATP = L-seryl-tRNA(Sec) + AMP + diphosphate + H(+). It functions in the pathway aminoacyl-tRNA biosynthesis; selenocysteinyl-tRNA(Sec) biosynthesis; L-seryl-tRNA(Sec) from L-serine and tRNA(Sec): step 1/1. Functionally, catalyzes the attachment of serine to tRNA(Ser). Is also able to aminoacylate tRNA(Sec) with serine, to form the misacylated tRNA L-seryl-tRNA(Sec), which will be further converted into selenocysteinyl-tRNA(Sec). This is Serine--tRNA ligase from Cutibacterium acnes (strain DSM 16379 / KPA171202) (Propionibacterium acnes).